Consider the following 63-residue polypeptide: Small integral membrane protein 43 (63 aa).

Important for interaction with SLC2A1 and SLC2A3 regions lie at residues 7-29 (LLLY…FVVI) and 51-57 (HREPWGF). Residues 9–29 (LYLALFFFLLFLLFLLLFVVI) traverse the membrane as a helical segment.

Interacts with glucose transporters SLC2A1/GLUT1 and SLC2A3/GLUT3; the interactions may promote SLC2A1- and SLC2A3-mediated glucose transport to meet the energy needs of mesendoderm differentiation. As to expression, accumulates in the posterior primitive streak of mid-gastrulation embryos at 7.0 dpc. In the adult, highly abundant and enriched in the brain compared to other organs.

It localises to the cell membrane. Required for mesendoderm differentiation. Interacts with glucose transporters and promotes glucose uptake. Probably augments the glucose uptake capacity of glucose transporter proteins to meet the energy needs of mesendoderm differentiation. The protein is Small integral membrane protein 43 of Mus musculus (Mouse).